The following is a 612-amino-acid chain: UvrABC system protein C (612 aa).

Positions 15–93 (HLPGVYRMYD…IKQHQPKYNV (79 aa)) constitute a GIY-YIG domain. One can recognise a UVR domain in the interval 203 to 238 (SQVIDYLMQKMEIAASELDFETAARFRDQIQSVRAV).

This sequence belongs to the UvrC family. Interacts with UvrB in an incision complex.

It localises to the cytoplasm. Functionally, the UvrABC repair system catalyzes the recognition and processing of DNA lesions. UvrC both incises the 5' and 3' sides of the lesion. The N-terminal half is responsible for the 3' incision and the C-terminal half is responsible for the 5' incision. The chain is UvrABC system protein C from Haemophilus ducreyi (strain 35000HP / ATCC 700724).